Here is a 395-residue protein sequence, read N- to C-terminus: Nucleoside diphosphate kinase homolog 7 (395 aa).

Residues 22–110 (QSERFAFIAE…YTARQLGSRK (89 aa)) form the DM10 domain.

It belongs to the NDK family. As to quaternary structure, component of sperm flagellar doublet microtubules. Component of the gamma-tubulin ring complex. Widely expressed. Expressed in the flagellum of epididymal sperm but not in testicular sperm (at protein level).

It is found in the cytoplasm. The protein resides in the cytoskeleton. The protein localises to the microtubule organizing center. Its subcellular location is the centrosome. It localises to the nucleus. It is found in the spindle. The protein resides in the cilium axoneme. The protein localises to the flagellum axoneme. Its subcellular location is the cell projection. It localises to the cilium. Functionally, possesses an intrinsic kinase activity. Displays 3'-5' exonuclease activity with a preference for single-stranded DNA. Does not seem to have nucleoside diphosphate kinase activity. Functional component of the gamma-tubulin ring complex, implicated in the regulation of the microtubule-nucleating activity of the gamma-tubulin ring complex in centrosomes, in a kinase activity-dependent manner. Part of the dynein-decorated doublet microtubules (DMTs) in cilia axoneme, which is required for motile cilia beating. This chain is Nucleoside diphosphate kinase homolog 7 (Nme7), found in Rattus norvegicus (Rat).